A 217-amino-acid chain; its full sequence is Non-structural protein NS3 (217 aa).

It belongs to the orbivirus NS3 family.

Its function is as follows. May play a role in the release of virions from infected cells. The sequence is that of Non-structural protein NS3 (Segment-10) from African horse sickness virus (AHSV).